Consider the following 407-residue polypeptide: MLRYPYFCRMYKECLSCWLESGIPNLGVWPNRIHTTAEKYREYEAREQTDQTQAQELHRSQDRDFETMAKLHIPVMVDEVVHCLSPQKGQIFLDMTFGSGGHTKAILQKESDIVLYALDRDPTAYALAEHLSELYPKQIRAMLGQFSQAEALLMKAGVQPGTFDGVLMDLGCSSMQLDTPERGFSLRKDGPLDMRMDGGRYPDMPTAADVVNALDQQALASILRTYGEEKHAKKIASAIVQARSIYPITRTQQLASIVAGAFPPSAIYTRKDLLQRSTHIATKTFQALRIFVNNELNELYTGLKTAQKFLRPGGRLVALSFHSLEDRIVKRFLLGISMTERFNLSVRQQVMKTSQLGSDHENTEEVSMRRAPLMWELIHKKVLSPQDQDVQDNPRGRSAKLRAAIKL.

S-adenosyl-L-methionine is bound by residues 100–102 (GGH), Asp119, Phe146, Asp169, and Gln176. Ser358 bears the Phosphoserine mark.

It belongs to the methyltransferase superfamily. RsmH family.

It is found in the mitochondrion matrix. The enzyme catalyses cytidine(839) in 12S rRNA + S-adenosyl-L-methionine = N(4)-methylcytidine(839) in 12S rRNA + S-adenosyl-L-homocysteine + H(+). Its function is as follows. N4-methylcytidine (m4C) methyltransferase responsible for the methylation of position C839 in mitochondrial 12S rRNA. Involved in the stabilization of 12S rRNA folding, therefore facilitating the assembly of the mitochondrial small ribosomal subunits. This Homo sapiens (Human) protein is 12S rRNA N(4)-cytidine methyltransferase METTL15.